The chain runs to 436 residues: Adenylosuccinate synthetase (436 aa).

GTP contacts are provided by residues 21-27 (GDEGKGK) and 49-51 (GHT). The active-site Proton acceptor is the Asp-22. Mg(2+)-binding residues include Asp-22 and Gly-49. IMP contacts are provided by residues 22-25 (DEGK), 47-50 (NAGH), Thr-135, Arg-149, Gln-230, Thr-245, and Arg-309. His-50 acts as the Proton donor in catalysis. 305–311 (TTTGRPR) contributes to the substrate binding site. GTP contacts are provided by residues Arg-311, 337–339 (KVD), and 423–425 (SSG).

Belongs to the adenylosuccinate synthetase family. In terms of assembly, homodimer. The cofactor is Mg(2+).

The protein resides in the cytoplasm. It catalyses the reaction IMP + L-aspartate + GTP = N(6)-(1,2-dicarboxyethyl)-AMP + GDP + phosphate + 2 H(+). The protein operates within purine metabolism; AMP biosynthesis via de novo pathway; AMP from IMP: step 1/2. Its function is as follows. Plays an important role in the de novo pathway of purine nucleotide biosynthesis. Catalyzes the first committed step in the biosynthesis of AMP from IMP. This is Adenylosuccinate synthetase from Thermoplasma volcanium (strain ATCC 51530 / DSM 4299 / JCM 9571 / NBRC 15438 / GSS1).